An 863-amino-acid polypeptide reads, in one-letter code: Leucine--tRNA ligase (863 aa).

A 'HIGH' region motif is present at residues 42–52 (PYPSGRLHMGH). Positions 622-626 (KMSKS) match the 'KMSKS' region motif. Position 625 (K625) interacts with ATP.

It belongs to the class-I aminoacyl-tRNA synthetase family.

It is found in the cytoplasm. It carries out the reaction tRNA(Leu) + L-leucine + ATP = L-leucyl-tRNA(Leu) + AMP + diphosphate. In Shewanella frigidimarina (strain NCIMB 400), this protein is Leucine--tRNA ligase.